Here is an 85-residue protein sequence, read N- to C-terminus: Alpha-defensin 11 (85 aa).

Positions 1–11 (ALVLLAFQVQA) are cleaved as a signal peptide. Positions 12 to 50 (DPIQNTDEETKTEEQPGEEDQAVSVSFGDPEGTSLQEES) are excised as a propeptide. The segment at 14–46 (IQNTDEETKTEEQPGEEDQAVSVSFGDPEGTSL) is disordered. Disulfide bonds link Cys-56-Cys-84, Cys-58-Cys-73, and Cys-63-Cys-83.

It belongs to the alpha-defensin family. Paneth cells of the small bowel.

The protein localises to the secreted. Its function is as follows. Probably contributes to the antimicrobial barrier function of the small bowel mucosa. This Mus musculus (Mouse) protein is Alpha-defensin 11 (Defa11).